A 337-amino-acid chain; its full sequence is U11/U12 small nuclear ribonucleoprotein 48 kDa protein (337 aa).

A CHHC U11-48K-type zinc finger spans residues 55-82 (IAICPYDSNHRMPKSSLTKHMESCRLRK). Zn(2+) contacts are provided by Cys-58, His-64, His-74, and Cys-78. Glycyl lysine isopeptide (Lys-Gly) (interchain with G-Cter in SUMO2) cross-links involve residues Lys-87 and Lys-104. The span at 255–276 (HWQEEQGRAGDAAEKNEERRSA) shows a compositional bias: basic and acidic residues. A disordered region spans residues 255 to 337 (HWQEEQGRAG…HSHKRRKQKI (83 aa)). Residues 294–310 (RHRRARSRSPHKRKRNK) show a composition bias toward basic residues. A compositionally biased stretch (basic and acidic residues) spans 311 to 326 (DKSSESRRRKERDGER). Residues 327-337 (HHSHKRRKQKI) are compositionally biased toward basic residues.

As to quaternary structure, component of the U11/U12 snRNPs that are part of the U12-type spliceosome. Not found in the major spliceosome.

The protein resides in the nucleus. Its function is as follows. Likely involved in U12-type 5' splice site recognition. This chain is U11/U12 small nuclear ribonucleoprotein 48 kDa protein (Snrnp48), found in Mus musculus (Mouse).